The following is a 272-amino-acid chain: Transformer-2 sex-determining protein (272 aa).

Disordered stretches follow at residues 21 to 102 (KHKC…DHPQ) and 182 to 272 (ITQR…QSRY). Residues 26-41 (HSSATSSPSSAASSES) show a composition bias toward low complexity. A compositionally biased stretch (basic and acidic residues) spans 87–102 (TSRDRQRMRQARDHPQ). In terms of domain architecture, RRM spans 105-183 (RCIGVFGLNT…RRIRVDYSIT (79 aa)). Positions 184–204 (QRAHTPTPGVYMGRPSRPLGR) are linker. Residues 205–218 (RSRERDYSTRDTSR) show a composition bias toward basic and acidic residues. Basic residues predominate over residues 238 to 266 (RKYRSRHRYDRSRSRTRSYSRSRSPRKPV).

Belongs to the splicing factor SR family. In terms of processing, extensively phosphorylated on serine residues in the RS domain.

Functionally, required for female sex determination in somatic cells and for spermatogenesis in male germ cells. Positive regulator of female-specific splicing and/or polyadenylation of doublesex (dsx) pre-mRNA. Splicing requires an enhancer complex, dsxRE (dsx repeat element: which contains six copies of a 13-nucleotide repeat and a purine-rich enhancer (PRE)). DsxRE is formed through cooperative interactions between tra, tra2 and the sr proteins, and these interactions require both the repeat sequences and PRE. PRE is required for specific binding of tra2 to the dsxRE. Protein-RNA and protein-protein interactions are involved in tra-2 dependent activation and repression of alternative splicing. The protein is Transformer-2 sex-determining protein (tra2) of Drosophila virilis (Fruit fly).